Reading from the N-terminus, the 73-residue chain is Translation initiation factor IF-1 (73 aa).

Residues 1 to 73 (MAKKEGALEL…TRGRIVYRHK (73 aa)) enclose the S1-like domain.

The protein belongs to the IF-1 family. As to quaternary structure, component of the 30S ribosomal translation pre-initiation complex which assembles on the 30S ribosome in the order IF-2 and IF-3, IF-1 and N-formylmethionyl-tRNA(fMet); mRNA recruitment can occur at any time during PIC assembly.

It localises to the cytoplasm. Its function is as follows. One of the essential components for the initiation of protein synthesis. Stabilizes the binding of IF-2 and IF-3 on the 30S subunit to which N-formylmethionyl-tRNA(fMet) subsequently binds. Helps modulate mRNA selection, yielding the 30S pre-initiation complex (PIC). Upon addition of the 50S ribosomal subunit IF-1, IF-2 and IF-3 are released leaving the mature 70S translation initiation complex. This is Translation initiation factor IF-1 from Cutibacterium acnes (strain DSM 16379 / KPA171202) (Propionibacterium acnes).